The sequence spans 118 residues: Putative membrane protein insertion efficiency factor (118 aa).

Belongs to the UPF0161 family.

Its subcellular location is the cell inner membrane. Could be involved in insertion of integral membrane proteins into the membrane. This Helicobacter pylori (strain P12) protein is Putative membrane protein insertion efficiency factor.